A 257-amino-acid chain; its full sequence is Phosphate import ATP-binding protein PstB (257 aa).

One can recognise an ABC transporter domain in the interval 11–252; it reads IQVRNLNFYY…PAKKQTEDYI (242 aa). 43-50 provides a ligand contact to ATP; the sequence is GPSGCGKS.

The protein belongs to the ABC transporter superfamily. Phosphate importer (TC 3.A.1.7) family. In terms of assembly, the complex is composed of two ATP-binding proteins (PstB), two transmembrane proteins (PstC and PstA) and a solute-binding protein (PstS).

It is found in the cell inner membrane. It carries out the reaction phosphate(out) + ATP + H2O = ADP + 2 phosphate(in) + H(+). Part of the ABC transporter complex PstSACB involved in phosphate import. Responsible for energy coupling to the transport system. The protein is Phosphate import ATP-binding protein PstB of Escherichia coli O6:K15:H31 (strain 536 / UPEC).